The chain runs to 110 residues: MEVAAKLFGARLSAQKARLVADQVRGKRVEEALDILTFSPKKASSIIKKVLESAIANAEHNEGLDVDELKVATICVDEGPTMKRIKPRAKGRADRIFKRTCHITVKVAEE.

The protein belongs to the universal ribosomal protein uL22 family. As to quaternary structure, part of the 50S ribosomal subunit.

Functionally, this protein binds specifically to 23S rRNA; its binding is stimulated by other ribosomal proteins, e.g. L4, L17, and L20. It is important during the early stages of 50S assembly. It makes multiple contacts with different domains of the 23S rRNA in the assembled 50S subunit and ribosome. The globular domain of the protein is located near the polypeptide exit tunnel on the outside of the subunit, while an extended beta-hairpin is found that lines the wall of the exit tunnel in the center of the 70S ribosome. This is Large ribosomal subunit protein uL22 from Hahella chejuensis (strain KCTC 2396).